A 145-amino-acid polypeptide reads, in one-letter code: ATP synthase epsilon chain (145 aa).

The protein belongs to the ATPase epsilon chain family. As to quaternary structure, F-type ATPases have 2 components, CF(1) - the catalytic core - and CF(0) - the membrane proton channel. CF(1) has five subunits: alpha(3), beta(3), gamma(1), delta(1), epsilon(1). CF(0) has three main subunits: a, b and c.

Its subcellular location is the cell inner membrane. Its function is as follows. Produces ATP from ADP in the presence of a proton gradient across the membrane. The polypeptide is ATP synthase epsilon chain (Francisella tularensis subsp. tularensis (strain FSC 198)).